The chain runs to 245 residues: Uridylate kinase (245 aa).

Residue 12-15 (KLSG) participates in ATP binding. Residues 20-25 (GEKGVG) are involved in allosteric activation by GTP. Gly54 provides a ligand contact to UMP. ATP is bound by residues Gly55 and Arg59. UMP contacts are provided by residues Asp74 and 135–142 (IGSPYFST). ATP contacts are provided by Asn163, Tyr169, and Asp172.

The protein belongs to the UMP kinase family. In terms of assembly, homohexamer.

Its subcellular location is the cytoplasm. The catalysed reaction is UMP + ATP = UDP + ADP. The protein operates within pyrimidine metabolism; CTP biosynthesis via de novo pathway; UDP from UMP (UMPK route): step 1/1. With respect to regulation, allosterically activated by GTP. Inhibited by UTP. Functionally, catalyzes the reversible phosphorylation of UMP to UDP. The chain is Uridylate kinase from Streptococcus thermophilus (strain ATCC BAA-250 / LMG 18311).